The chain runs to 359 residues: MPLSRLIIQQFRNIKACDIALSPGFNFLIGPNGSGKTSVLEAIYLLGHGRSFKSALTGRVIQNECDQLFVYGRFLNSDQFELPIGINKQRDGTTEVKIGGQSGQKLAQLAQVLPLQLIHPEGFDLLTDGPKHRRAFIDWGVFHTEPAFYDAWGRFKRLNKQRNALLKSAKSYQELSYWDKEMARLAELISQWRADYVAQMQSKAEQLCQEFLPEFHIQLKYYRGWEKETPYQQILEENFERDQTLGYTVSGPNKADLRIKVNNTPVEDVLSRGQLKLMVCALRLAQGQHLTEKTGKQCVYLIDDFASELDSQRRKRLADCLKQTGAQVFVSSITENQISDMRDDSGRLFHVEQGVIEQG.

ATP is bound at residue 30 to 37 (GPNGSGKT).

Belongs to the RecF family.

The protein localises to the cytoplasm. Its function is as follows. The RecF protein is involved in DNA metabolism; it is required for DNA replication and normal SOS inducibility. RecF binds preferentially to single-stranded, linear DNA. It also seems to bind ATP. In Vibrio vulnificus (strain CMCP6), this protein is DNA replication and repair protein RecF.